Consider the following 475-residue polypeptide: RNA pseudouridine synthase 3, mitochondrial (475 aa).

Residues 1-15 (MLCRRRRVGAAVRWL) constitute a mitochondrion transit peptide. Residues 40–74 (RLGKPKPGPRPRQLLSLPPFPGGGDGDPLPGRKAA) are disordered. Residues 90 to 160 (ADVPQEVVQA…GEIKKRYETI (71 aa)) form the S4 RNA-binding domain. Residue Asp230 is part of the active site.

This sequence belongs to the pseudouridine synthase RluA family.

Its subcellular location is the mitochondrion. It catalyses the reaction a uridine in RNA = a pseudouridine in RNA. The polypeptide is RNA pseudouridine synthase 3, mitochondrial (Oryza sativa subsp. japonica (Rice)).